Reading from the N-terminus, the 203-residue chain is Endo-type membrane-bound lytic murein transglycosylase A (203 aa).

The signal sequence occupies residues 1–15; the sequence is MKLRWLLILVVFLAG. C16 is lipidated: N-palmitoyl cysteine. C16 carries the S-diacylglycerol cysteine lipid modification.

This sequence belongs to the transglycosylase Slt family.

Its subcellular location is the cell outer membrane. The catalysed reaction is Endolytic cleavage of the (1-&gt;4)-beta-glycosidic linkage between N-acetylmuramic acid (MurNAc) and N-acetylglucosamine (GlcNAc) residues in peptidoglycan with concomitant formation of a 1,6-anhydrobond in the MurNAc residue.. Functionally, murein-degrading enzyme. May play a role in recycling of muropeptides during cell elongation and/or cell division. Preferentially cleaves at a distance of more than two disaccharide units from the ends of the glycan chain. This chain is Endo-type membrane-bound lytic murein transglycosylase A, found in Klebsiella pneumoniae (strain 342).